A 243-amino-acid polypeptide reads, in one-letter code: Methylthioribulose-1-phosphate dehydratase (243 aa).

The disordered stretch occupies residues 1–22 (MCPADQTVATNNNDHLVQSEDP). Over residues 7 to 16 (TVATNNNDHL) the composition is skewed to polar residues. Cys-103 provides a ligand contact to substrate. 2 residues coordinate Zn(2+): His-120 and His-122. Glu-149 serves as the catalytic Proton donor/acceptor. A Zn(2+)-binding site is contributed by His-205.

This sequence belongs to the aldolase class II family. MtnB subfamily. It depends on Zn(2+) as a cofactor.

The protein localises to the cytoplasm. The catalysed reaction is 5-(methylsulfanyl)-D-ribulose 1-phosphate = 5-methylsulfanyl-2,3-dioxopentyl phosphate + H2O. Its pathway is amino-acid biosynthesis; L-methionine biosynthesis via salvage pathway; L-methionine from S-methyl-5-thio-alpha-D-ribose 1-phosphate: step 2/6. Its function is as follows. Catalyzes the dehydration of methylthioribulose-1-phosphate (MTRu-1-P) into 2,3-diketo-5-methylthiopentyl-1-phosphate (DK-MTP-1-P). This Penicillium rubens (strain ATCC 28089 / DSM 1075 / NRRL 1951 / Wisconsin 54-1255) (Penicillium chrysogenum) protein is Methylthioribulose-1-phosphate dehydratase.